The following is a 187-amino-acid chain: Putative glutathione-dependent formaldehyde-activating enzyme (187 aa).

Positions F20–D166 constitute a CENP-V/GFA domain. Positions 27, 29, 48, 50, 53, 95, and 98 each coordinate Zn(2+).

It belongs to the Gfa family. Zn(2+) serves as cofactor.

It catalyses the reaction S-(hydroxymethyl)glutathione = glutathione + formaldehyde. The protein operates within one-carbon metabolism; formaldehyde degradation; formate from formaldehyde (glutathione route): step 1/3. In terms of biological role, catalyzes the condensation of formaldehyde and glutathione to S-hydroxymethylglutathione. This chain is Putative glutathione-dependent formaldehyde-activating enzyme, found in Verticillium alfalfae (strain VaMs.102 / ATCC MYA-4576 / FGSC 10136) (Verticillium wilt of alfalfa).